Here is a 737-residue protein sequence, read N- to C-terminus: Probable beta-glucosidase L (737 aa).

The signal sequence occupies residues 1–19 (MRSLIRSGALNAFLAASLA). Asn-225 is a glycosylation site (N-linked (GlcNAc...) asparagine). Residue Asp-253 is part of the active site. N-linked (GlcNAc...) asparagine glycans are attached at residues Asn-340, Asn-365, and Asn-608.

The protein belongs to the glycosyl hydrolase 3 family.

It localises to the secreted. It catalyses the reaction Hydrolysis of terminal, non-reducing beta-D-glucosyl residues with release of beta-D-glucose.. Its pathway is glycan metabolism; cellulose degradation. Its function is as follows. Beta-glucosidases are one of a number of cellulolytic enzymes involved in the degradation of cellulosic biomass. Catalyzes the last step releasing glucose from the inhibitory cellobiose. In Emericella nidulans (strain FGSC A4 / ATCC 38163 / CBS 112.46 / NRRL 194 / M139) (Aspergillus nidulans), this protein is Probable beta-glucosidase L (bglL).